We begin with the raw amino-acid sequence, 407 residues long: tRNA (guanine(9)-N1)-methyltransferase (407 aa).

Residues methionine 1–glycine 19 are compositionally biased toward basic and acidic residues. Disordered stretches follow at residues methionine 1–arginine 105 and glutamate 220–glutamate 256. Low complexity predominate over residues asparagine 20 to glutamine 32. Residues leucine 91–arginine 103 are compositionally biased toward basic residues. In terms of domain architecture, SAM-dependent MTase TRM10-type spans alanine 120–lysine 356. S-adenosyl-L-methionine is bound by residues leucine 263 to serine 264, glycine 283, aspartate 287 to glutamate 291, cysteine 295, leucine 309, and threonine 321 to leucine 323. Aspartate 287 (proton acceptor) is an active-site residue. Residues lysine 353–lysine 407 are disordered. Positions glutamine 368–lysine 386 are enriched in acidic residues. Positions alanine 394–lysine 407 are enriched in polar residues.

This sequence belongs to the class IV-like SAM-binding methyltransferase superfamily. TRM10 family. In terms of assembly, monomer.

It is found in the cytoplasm. Its subcellular location is the nucleus. It catalyses the reaction guanosine(9) in tRNA + S-adenosyl-L-methionine = N(1)-methylguanosine(9) in tRNA + S-adenosyl-L-homocysteine + H(+). In terms of biological role, S-adenosyl-L-methionine-dependent guanine N(1)-methyltransferase that catalyzes the formation of N(1)-methylguanine at position 9 (m1G9) in cytoplasmic tRNA. The protein is tRNA (guanine(9)-N1)-methyltransferase of Gibberella zeae (strain ATCC MYA-4620 / CBS 123657 / FGSC 9075 / NRRL 31084 / PH-1) (Wheat head blight fungus).